Consider the following 377-residue polypeptide: Succinyl-diaminopimelate desuccinylase (377 aa).

H68 serves as a coordination point for Zn(2+). D70 is a catalytic residue. A Zn(2+)-binding site is contributed by D101. Residue E135 is the Proton acceptor of the active site. Zn(2+) is bound by residues E136, E164, and H350.

This sequence belongs to the peptidase M20A family. DapE subfamily. As to quaternary structure, homodimer. Zn(2+) is required as a cofactor. It depends on Co(2+) as a cofactor.

The catalysed reaction is N-succinyl-(2S,6S)-2,6-diaminopimelate + H2O = (2S,6S)-2,6-diaminopimelate + succinate. Its pathway is amino-acid biosynthesis; L-lysine biosynthesis via DAP pathway; LL-2,6-diaminopimelate from (S)-tetrahydrodipicolinate (succinylase route): step 3/3. Its function is as follows. Catalyzes the hydrolysis of N-succinyl-L,L-diaminopimelic acid (SDAP), forming succinate and LL-2,6-diaminopimelate (DAP), an intermediate involved in the bacterial biosynthesis of lysine and meso-diaminopimelic acid, an essential component of bacterial cell walls. The polypeptide is Succinyl-diaminopimelate desuccinylase (Aliivibrio salmonicida (strain LFI1238) (Vibrio salmonicida (strain LFI1238))).